A 1057-amino-acid polypeptide reads, in one-letter code: Carbamoyl phosphate synthase large chain (1057 aa).

Positions 1-401 (MPKRDDIQTI…SLLKAIRSLE (401 aa)) are carboxyphosphate synthetic domain. ATP contacts are provided by R129, R169, G175, G176, K208, I210, E215, G241, I242, H243, Q284, and E298. Positions 133–327 (RSLMNDLNVP…IAKLAAKIAV (195 aa)) constitute an ATP-grasp 1 domain. Mg(2+) is bound by residues Q284, E298, and N300. Positions 284, 298, and 300 each coordinate Mn(2+). Residues 402 to 546 (YGVHHLGLPN…YGTYETENES (145 aa)) are oligomerization domain. The carbamoyl phosphate synthetic domain stretch occupies residues 547–929 (IVTDKEKILV…ALYKGLTGSG (383 aa)). Residues 671-861 (EALLHTIDVP…MAQLAMQAIM (191 aa)) form the ATP-grasp 2 domain. ATP contacts are provided by R707, R746, L748, E752, G777, V778, H779, S780, Q820, and E832. Q820, E832, and N834 together coordinate Mg(2+). 3 residues coordinate Mn(2+): Q820, E832, and N834. The MGS-like domain maps to 930–1057 (VEVKDHGTVL…ESMTFSMRTM (128 aa)). Residues 930 to 1057 (VEVKDHGTVL…ESMTFSMRTM (128 aa)) form an allosteric domain region.

Belongs to the CarB family. Composed of two chains; the small (or glutamine) chain promotes the hydrolysis of glutamine to ammonia, which is used by the large (or ammonia) chain to synthesize carbamoyl phosphate. Tetramer of heterodimers (alpha,beta)4. Requires Mg(2+) as cofactor. It depends on Mn(2+) as a cofactor.

It carries out the reaction hydrogencarbonate + L-glutamine + 2 ATP + H2O = carbamoyl phosphate + L-glutamate + 2 ADP + phosphate + 2 H(+). The enzyme catalyses hydrogencarbonate + NH4(+) + 2 ATP = carbamoyl phosphate + 2 ADP + phosphate + 2 H(+). Its pathway is amino-acid biosynthesis; L-arginine biosynthesis; carbamoyl phosphate from bicarbonate: step 1/1. It functions in the pathway pyrimidine metabolism; UMP biosynthesis via de novo pathway; (S)-dihydroorotate from bicarbonate: step 1/3. Large subunit of the glutamine-dependent carbamoyl phosphate synthetase (CPSase). CPSase catalyzes the formation of carbamoyl phosphate from the ammonia moiety of glutamine, carbonate, and phosphate donated by ATP, constituting the first step of 2 biosynthetic pathways, one leading to arginine and/or urea and the other to pyrimidine nucleotides. The large subunit (synthetase) binds the substrates ammonia (free or transferred from glutamine from the small subunit), hydrogencarbonate and ATP and carries out an ATP-coupled ligase reaction, activating hydrogencarbonate by forming carboxy phosphate which reacts with ammonia to form carbamoyl phosphate. The polypeptide is Carbamoyl phosphate synthase large chain (Staphylococcus haemolyticus (strain JCSC1435)).